The following is a 437-amino-acid chain: Glutamate-1-semialdehyde 2,1-aminomutase (437 aa).

Lys279 is modified (N6-(pyridoxal phosphate)lysine).

This sequence belongs to the class-III pyridoxal-phosphate-dependent aminotransferase family. HemL subfamily. In terms of assembly, homodimer. The cofactor is pyridoxal 5'-phosphate.

The protein resides in the cytoplasm. The enzyme catalyses (S)-4-amino-5-oxopentanoate = 5-aminolevulinate. The protein operates within porphyrin-containing compound metabolism; protoporphyrin-IX biosynthesis; 5-aminolevulinate from L-glutamyl-tRNA(Glu): step 2/2. The sequence is that of Glutamate-1-semialdehyde 2,1-aminomutase from Sorangium cellulosum (strain So ce56) (Polyangium cellulosum (strain So ce56)).